The following is a 751-amino-acid chain: Putative tyrosine-protein kinase EpsB (751 aa).

Residues 1 to 31 (MTQNLSQPPAVNAPESELDLVRYLDVLVANR) are Cytoplasmic-facing. A helical transmembrane segment spans residues 32-52 (WLIAGIAAVVMLLGATYAFLA). At 53 to 444 (RPVYEADVLV…VPEEPVKPKK (392 aa)) the chain is on the periplasmic side. A helical membrane pass occupies residues 445-465 (LTVTALAGVLGVVLGVVAAFV). Over 466–751 (RNTLFGGITE…PSAEAEAESA (286 aa)) the chain is Cytoplasmic.

Belongs to the etk/wzc family.

The protein resides in the cell inner membrane. It carries out the reaction L-tyrosyl-[protein] + ATP = O-phospho-L-tyrosyl-[protein] + ADP + H(+). In terms of biological role, probably involved in polymerization and/or export of exopolysaccharide EPS I which functions as a virulence factor. May be involved in an ATP-dependent process in the pathway for EPS I production, possibly export of the trimeric repeat units across the inner membrane or their polymerization. In Ralstonia nicotianae (strain ATCC BAA-1114 / GMI1000) (Ralstonia solanacearum), this protein is Putative tyrosine-protein kinase EpsB (epsB).